The sequence spans 158 residues: Endoribonuclease YbeY (158 aa).

Positions 118, 122, and 128 each coordinate Zn(2+).

Belongs to the endoribonuclease YbeY family. Zn(2+) is required as a cofactor.

It localises to the cytoplasm. Its function is as follows. Single strand-specific metallo-endoribonuclease involved in late-stage 70S ribosome quality control and in maturation of the 3' terminus of the 16S rRNA. The polypeptide is Endoribonuclease YbeY (Haemophilus ducreyi (strain 35000HP / ATCC 700724)).